The following is a 626-amino-acid chain: Chaperone protein HtpG (626 aa).

The tract at residues 1–341 is a; substrate-binding; it reads MAKREFKAES…SEDLSLNISR (341 aa). The tract at residues 342–552 is b; sequence EMLQHDRQLK…DGEVTIEMEK (211 aa). Residues 553–626 are c; it reads ILNAMPDNQH…FTNDICKVMA (74 aa).

It belongs to the heat shock protein 90 family. In terms of assembly, homodimer.

It localises to the cytoplasm. Its function is as follows. Molecular chaperone. Has ATPase activity. This Bacillus licheniformis (strain ATCC 14580 / DSM 13 / JCM 2505 / CCUG 7422 / NBRC 12200 / NCIMB 9375 / NCTC 10341 / NRRL NRS-1264 / Gibson 46) protein is Chaperone protein HtpG.